A 470-amino-acid polypeptide reads, in one-letter code: Annexin C1 (470 aa).

The interval 1–143 (MYGQQNNYGA…QGQSPMMYLG (143 aa)) is disordered. Residues 15–34 (QWGQAPPQGYQPGYQNGPPA) show a composition bias toward low complexity. Over residues 82–92 (PQPPFGAPSPA) the composition is skewed to pro residues. 2 stretches are compositionally biased toward low complexity: residues 93–110 (PAGY…YGAP) and 128–138 (GYGSQPQGQSP). Annexin repeat units follow at residues 161 to 232 (YDAR…LLSL), 233 to 304 (GPLG…MALS), 316 to 388 (QLVQ…FIAR), and 395 to 468 (DGVV…GIIE).

It belongs to the annexin family.

Its function is as follows. Does not appear to play a major role in virulence. May play a role in titan cell formation. The polypeptide is Annexin C1 (Cryptococcus neoformans var. grubii serotype A (strain H99 / ATCC 208821 / CBS 10515 / FGSC 9487) (Filobasidiella neoformans var. grubii)).